A 635-amino-acid polypeptide reads, in one-letter code: Sodium- and chloride-dependent creatine transporter 1 (635 aa).

Residues 1 to 27 (MAKKSAENGIYSVSGDEKKGPLIVSGP) are disordered. Residues 1–60 (MAKKSAENGIYSVSGDEKKGPLIVSGPDGAPAKGDGPAGLGAPGGRLAVPPRETWTRQMD) are Cytoplasmic-facing. Residues 61–81 (FIMSCVGFAVGLGNVWRFPYL) form a helical membrane-spanning segment. Over 82-87 (CYKNGG) the chain is Extracellular. The chain crosses the membrane as a helical span at residues 88-108 (GVFLIPYVLIALVGGIPIFFL). At 109 to 138 (EISLGQFMKAGSINVWNICPLFKGLGYASM) the chain is on the cytoplasmic side. The helical transmembrane segment at 139 to 159 (VIVFYCNTYYIMVLAWGFYYL) threads the bilayer. The Extracellular segment spans residues 160–230 (VKSFTTTLPW…LSTGLEVPGA (71 aa)). Asn-192 and Asn-197 each carry an N-linked (GlcNAc...) asparagine glycan. A helical transmembrane segment spans residues 231–251 (LNWEVTLCLLACWVLVYFCVW). The Cytoplasmic segment spans residues 252–269 (KGVKSTGKIVYFTATFPY). A helical membrane pass occupies residues 270 to 290 (VVLVVLLVRGVLLPGALDGII). Topologically, residues 291-304 (YYLKPDWSKLGSPQ) are extracellular. The helical transmembrane segment at 305-325 (VWIDAGTQIFFSYAIGLGALT) threads the bilayer. Topologically, residues 326-341 (ALGSYNRFNNNCYKDA) are cytoplasmic. Residues 342–362 (IILALINSGTSFFAGFVVFSI) form a helical membrane-spanning segment. Residues 363–394 (LGFMATEQGVHISKVAESGPGLAFIAYPRAVT) lie on the Extracellular side of the membrane. The chain crosses the membrane as a helical span at residues 395 to 415 (LMPVAPLWAALFFFMLLLLGL). At 416 to 444 (DSQFVGVEGFITGLLDLLPASYYFRFQRE) the chain is on the cytoplasmic side. Residues 445 to 465 (ISVALCCALCFVIDLSMVTDG) traverse the membrane as a helical segment. Over 466 to 479 (GMYVFQLFDYYSAS) the chain is Extracellular. Residues 480–500 (GTTLLWQAFWECVVVAWVYGA) form a helical membrane-spanning segment. Residues 501 to 520 (DRFMDDIACMIGYRPCPWMK) are Cytoplasmic-facing. A helical transmembrane segment spans residues 521-541 (WCWSFFTPLVCMGIFIFNIVY). Residues 542-560 (YEPLVYNNTYVYPWWGEAM) are Extracellular-facing. The N-linked (GlcNAc...) asparagine glycan is linked to Asn-548. Residues 561-581 (GWAFALSSMLCVPLHLLGCLL) form a helical membrane-spanning segment. Over 582–635 (RAKGTMAERWQHLTQPIWGLHHLEYRAQDADVRGLTTLTPVSESSKVVVVESVM) the chain is Cytoplasmic. A phosphothreonine mark is found at Thr-617 and Thr-620. Ser-623 carries the phosphoserine modification.

The protein belongs to the sodium:neurotransmitter symporter (SNF) (TC 2.A.22) family. SLC6A8 subfamily. In terms of processing, glycosylated. In terms of tissue distribution, brain. Highly expressed in brain capillaries branching in all cortical layers and moderately expressed in neuronal perikarya (at protein level).

It localises to the cell membrane. It is found in the apical cell membrane. The enzyme catalyses creatine(out) + chloride(out) + 2 Na(+)(out) = creatine(in) + chloride(in) + 2 Na(+)(in). Functionally, creatine:sodium symporter which mediates the uptake of creatine. Plays an important role in supplying creatine to the brain via the blood-brain barrier. In Mus musculus (Mouse), this protein is Sodium- and chloride-dependent creatine transporter 1 (Slc6a8).